A 122-amino-acid chain; its full sequence is MASVYENSYMIVLIFLLLGILLPVVALTLGRMLRPNKPSAAKATTYESGIEPFHDANIRFHARYYIFALLFVIFDVETLFLYPWAVAYDKLGLFALIEMLIFVVMLLVGLAYAWKKKVLQWL.

3 helical membrane-spanning segments follow: residues 10–30 (MIVL…LTLG), 66–86 (IFAL…PWAV), and 91–111 (LGLF…VGLA).

It belongs to the complex I subunit 3 family. In terms of assembly, NDH-1 is composed of 14 different subunits. Subunits NuoA, H, J, K, L, M, N constitute the membrane sector of the complex.

It is found in the cell membrane. It catalyses the reaction a quinone + NADH + 5 H(+)(in) = a quinol + NAD(+) + 4 H(+)(out). Its function is as follows. NDH-1 shuttles electrons from NADH, via FMN and iron-sulfur (Fe-S) centers, to quinones in the respiratory chain. The immediate electron acceptor for the enzyme in this species is believed to be a menaquinone. Couples the redox reaction to proton translocation (for every two electrons transferred, four hydrogen ions are translocated across the cytoplasmic membrane), and thus conserves the redox energy in a proton gradient. The polypeptide is NADH-quinone oxidoreductase subunit A (Bacillus cereus (strain ATCC 14579 / DSM 31 / CCUG 7414 / JCM 2152 / NBRC 15305 / NCIMB 9373 / NCTC 2599 / NRRL B-3711)).